The sequence spans 256 residues: Probable succinate transporter subunit YjjP (256 aa).

The Cytoplasmic portion of the chain corresponds to Met-1–Arg-113. A helical membrane pass occupies residues Tyr-114–Asn-135. At Gly-136–Gly-140 the chain is on the periplasmic side. A helical transmembrane segment spans residues Ala-141–Leu-158. Residues Ala-159–Asn-168 lie on the Cytoplasmic side of the membrane. A helical transmembrane segment spans residues Phe-169–Phe-189. Over Ser-190–Thr-194 the chain is Periplasmic. The helical transmembrane segment at Ile-195–Ala-215 threads the bilayer. The Cytoplasmic segment spans residues Asp-216–Arg-228. A helical transmembrane segment spans residues Trp-229–Ile-249. Residues Trp-250–Val-256 lie on the Periplasmic side of the membrane.

Belongs to the ThrE exporter (TC 2.A.79) family. The transporter is composed of YjjB and YjjP.

The protein resides in the cell inner membrane. Functionally, involved in succinate export with YjjB. Both proteins are required for export. Contributes to succinate production under both aerobic and anaerobic conditions. This is Probable succinate transporter subunit YjjP (yjjP) from Escherichia coli (strain K12).